A 394-amino-acid chain; its full sequence is 5-azacytidine-induced protein 2 (394 aa).

The homodimerization stretch occupies residues 1–197 (MDALVEDDIC…IELRKAKQTD (197 aa)). Coiled-coil stretches lie at residues 40-76 (ALVT…LIAR) and 102-196 (DRDN…AKQT). Positions 216–257 (SDNMQHAYWELKREMSNLHLVTQVQAELLRKLKTSTAIKKAC) are interaction with TBK1 and IKBKE. 2 positions are modified to phosphoserine: Ser318 and Ser355. The tract at residues 355 to 379 (SPPKSSETAFGETKSKTLPLPNLPP) is disordered.

As to quaternary structure, homodimer. Interacts with IKBKE, TBK1 and TICAM1. Interacts with TAX1BP1. Interacts with CALCOCO2. Post-translationally, ubiquitinated via 'Lys-48'-linked polyubiquitination by TRIM38, leading to its degradation.

The protein localises to the cytoplasm. Adapter protein which binds TBK1 and IKBKE playing a role in antiviral innate immunity. Activates serine/threonine-protein kinase TBK1 and facilitates its oligomerization. Enhances the phosphorylation of NF-kappa-B p65 subunit RELA by TBK1. Promotes TBK1-induced as well as TNF-alpha or PMA-induced activation of NF-kappa-B. Participates in IFNB promoter activation via TICAM1. This Macaca fascicularis (Crab-eating macaque) protein is 5-azacytidine-induced protein 2 (AZI2).